We begin with the raw amino-acid sequence, 296 residues long: Small ribosomal subunit protein uS2 (296 aa).

A disordered region spans residues Trp245 to Trp296. Residues Ala263 to Glu289 show a composition bias toward low complexity.

Belongs to the universal ribosomal protein uS2 family. Component of the small ribosomal subunit. Mature ribosomes consist of a small (40S) and a large (60S) subunit. The 40S subunit contains about 33 different proteins and 1 molecule of RNA (18S). The 60S subunit contains about 49 different proteins and 3 molecules of RNA (25S, 5.8S and 5S). Interacts with RPS21.

Its subcellular location is the cytoplasm. Its function is as follows. Required for the assembly and/or stability of the 40S ribosomal subunit. Required for the processing of the 20S rRNA-precursor to mature 18S rRNA in a late step of the maturation of 40S ribosomal subunits. The chain is Small ribosomal subunit protein uS2 from Fusarium vanettenii (strain ATCC MYA-4622 / CBS 123669 / FGSC 9596 / NRRL 45880 / 77-13-4) (Fusarium solani subsp. pisi).